The primary structure comprises 292 residues: Peroxidase 2 (292 aa).

Intrachain disulfides connect C7–C86, C40–C45, C92–C288, and C171–C199. The active-site Proton acceptor is the H38. Ca(2+) is bound by residues D39, V42, G44, D46, and S48. An N-linked (GlcNAc...) asparagine glycan is attached at N68. A substrate-binding site is contributed by P134. An N-linked (GlcNAc...) asparagine glycan is attached at N139. Residue H164 coordinates heme b. Position 165 (T165) interacts with Ca(2+). The N-linked (GlcNAc...) asparagine glycan is linked to N179. Residues D210, T213, and D218 each contribute to the Ca(2+) site.

It belongs to the peroxidase family. Classical plant (class III) peroxidase subfamily. It depends on Ca(2+) as a cofactor. Heme b is required as a cofactor.

It carries out the reaction 2 a phenolic donor + H2O2 = 2 a phenolic radical donor + 2 H2O. Functionally, removal of H(2)O(2), oxidation of toxic reductants, biosynthesis and degradation of lignin, suberization, auxin catabolism, response to environmental stresses such as wounding, pathogen attack and oxidative stress. These functions might be dependent on each isozyme/isoform in each plant tissue. This is Peroxidase 2 from Cucumis sativus (Cucumber).